We begin with the raw amino-acid sequence, 449 residues long: Phosphoglucosamine mutase (449 aa).

The active-site Phosphoserine intermediate is the Ser101. Mg(2+) is bound by residues Ser101, Asp241, Asp243, and Asp245. Phosphoserine is present on Ser101.

It belongs to the phosphohexose mutase family. The cofactor is Mg(2+). Post-translationally, activated by phosphorylation.

It carries out the reaction alpha-D-glucosamine 1-phosphate = D-glucosamine 6-phosphate. In terms of biological role, catalyzes the conversion of glucosamine-6-phosphate to glucosamine-1-phosphate. The polypeptide is Phosphoglucosamine mutase (Acetivibrio thermocellus (strain ATCC 27405 / DSM 1237 / JCM 9322 / NBRC 103400 / NCIMB 10682 / NRRL B-4536 / VPI 7372) (Clostridium thermocellum)).